The chain runs to 102 residues: MGKVLRKPFAKAVPLLFLAATWLLTGVLPAGASSPTNAAAASLTEAQDQFYSYTCNADTFSPSLTSFASIWALLTLVLVIIASAIYLMYVCFNKFVNTLLTD.

A signal peptide spans 1-32 (MGKVLRKPFAKAVPLLFLAATWLLTGVLPAGA). Over 33–69 (SSPTNAAAASLTEAQDQFYSYTCNADTFSPSLTSFAS) the chain is Virion surface. A helical transmembrane segment spans residues 70–90 (IWALLTLVLVIIASAIYLMYV). The Intravirion portion of the chain corresponds to 91–102 (CFNKFVNTLLTD).

This sequence belongs to the herpesviridae glycoprotein N family. In terms of assembly, interacts (via N-terminus) with gM (via N-terminus). The gM-gN heterodimer forms the gCII complex. Post-translationally, O-glycosylated. Contains alpha 2,6-sialic acid residues.

The protein resides in the virion membrane. The protein localises to the host membrane. Its subcellular location is the host Golgi apparatus. It localises to the host trans-Golgi network. Functionally, envelope glycoprotein necessary for proper maturation of gM and modulation of its membrane fusion activity. Also plays a critical role in virion morphogenesis. In Epstein-Barr virus (strain AG876) (HHV-4), this protein is Envelope glycoprotein N.